Reading from the N-terminus, the 289-residue chain is Digeranylgeranylglyceryl phosphate synthase (289 aa).

The next 8 helical transmembrane spans lie at 18-38 (LMAG…LISG), 47-67 (AFPF…SGAG), 99-119 (FYFS…INSI), 120-140 (CGSI…TLKG), 163-183 (IFGF…ALAI), 218-238 (LAVL…FMSV), 243-263 (YIYL…QLLV), and 269-289 (KSSK…IAGV).

It belongs to the UbiA prenyltransferase family. DGGGP synthase subfamily. The cofactor is Mg(2+).

It is found in the cell membrane. The catalysed reaction is sn-3-O-(geranylgeranyl)glycerol 1-phosphate + (2E,6E,10E)-geranylgeranyl diphosphate = 2,3-bis-O-(geranylgeranyl)-sn-glycerol 1-phosphate + diphosphate. It functions in the pathway membrane lipid metabolism; glycerophospholipid metabolism. Prenyltransferase that catalyzes the transfer of the geranylgeranyl moiety of geranylgeranyl diphosphate (GGPP) to the C2 hydroxyl of (S)-3-O-geranylgeranylglyceryl phosphate (GGGP). This reaction is the second ether-bond-formation step in the biosynthesis of archaeal membrane lipids. This Methanosarcina mazei (strain ATCC BAA-159 / DSM 3647 / Goe1 / Go1 / JCM 11833 / OCM 88) (Methanosarcina frisia) protein is Digeranylgeranylglyceryl phosphate synthase.